Consider the following 193-residue polypeptide: Surfactant protein C (193 aa).

Positions 1–23 (MDMSSKEVLMESPPDYSAGPRSQ) are excised as a propeptide. 2 S-palmitoyl cysteine lipidation sites follow: Cys-28 and Cys-29. A propeptide spanning residues 59-193 (HMSQKHTEMV…LCGELPLYYI (135 aa)) is cleaved from the precursor. Residues 94-193 (FSIGSTGIVV…LCGELPLYYI (100 aa)) form the BRICHOS domain. Cys-121 and Cys-185 form a disulfide bridge. The tract at residues 147 to 170 (KPSTPTSKLGQEEGHDTGSESDSS) is disordered.

The protein resides in the secreted. It is found in the extracellular space. Its subcellular location is the surface film. In terms of biological role, pulmonary surfactant associated proteins promote alveolar stability by lowering the surface tension at the air-liquid interface in the peripheral air spaces. In Mus musculus (Mouse), this protein is Surfactant protein C.